We begin with the raw amino-acid sequence, 39 residues long: Omega-theraphotoxin-Asp1a (39 aa).

Cystine bridges form between cysteine 4-cysteine 25, cysteine 8-cysteine 31, and cysteine 17-cysteine 36.

In terms of tissue distribution, expressed by the venom gland.

The protein resides in the secreted. Toxin that inhibits voltage-gated calcium channels in rat cerebellar granule cells (IC(50)&lt;200 nM). Is lethal to cockroaches. This is Omega-theraphotoxin-Asp1a from Aphonopelma sp. (American tarantula).